The following is a 566-amino-acid chain: Medium-chain fatty-acid--CoA ligase (566 aa).

231-242 serves as a coordination point for ATP; the sequence is ILASERAYCARL.

Belongs to the ATP-dependent AMP-binding enzyme family. In terms of assembly, homodimer. It depends on Mg(2+) as a cofactor.

Its subcellular location is the cell membrane. It catalyses the reaction hexanoate + ATP + CoA = hexanoyl-CoA + AMP + diphosphate. The enzyme catalyses octanoate + ATP + CoA = octanoyl-CoA + AMP + diphosphate. It carries out the reaction dodecanoate + ATP + CoA = dodecanoyl-CoA + AMP + diphosphate. Its pathway is lipid metabolism; fatty acid beta-oxidation. Its function is as follows. Catalyzes the esterification, concomitant with transport, of exogenous fatty acids into metabolically active CoA thioesters for subsequent degradation or incorporation into phospholipids. Is maximally active on C6:0, C8:0 and C12:0 fatty acids, while has a low activity on C14-C18 chain length fatty acids. Is involved in the anaerobic beta-oxidative degradation of fatty acids, which allows anaerobic growth of E.coli on fatty acids as a sole carbon and energy source in the presence of nitrate or fumarate as a terminal electron acceptor. Can functionally replace FadD under anaerobic conditions. This is Medium-chain fatty-acid--CoA ligase from Escherichia coli (strain K12).